Here is a 295-residue protein sequence, read N- to C-terminus: Movement protein (295 aa).

Positions 256–295 (KKTNVKEESPTSDPQSGEVSSMTQSVPGAADTRIPKPRRR) are disordered. The span at 266–281 (TSDPQSGEVSSMTQSV) shows a compositional bias: polar residues.

It belongs to the bromovirus movement protein family.

It localises to the host cell junction. The protein resides in the host plasmodesma. Its function is as follows. Transports viral genome to neighboring plant cells directly through plasmosdesmata, without any budding. The movement protein allows efficient cell to cell propagation, by bypassing the host cell wall barrier. Acts by forming a tubular structure at the host plasmodesmata, enlarging it enough to allow free passage of virion capsids. The protein is Movement protein of Broad bean mottle virus.